The following is a 290-amino-acid chain: Concanavalin-A (290 aa).

An N-terminal signal peptide occupies residues 1–29; sequence MAISKKSSLFLPIFTFITMFLMVVNKVSS. A carbohydrate-binding residues include D119 and R139. D119 is a Ca(2+) binding site. Positions 149 to 163 are excised as a propeptide; it reads VIRNSTTIDFNAAYN. N152 carries N-linked (GlcNAc...) asparagine glycosylation. Positions 171 and 173 each coordinate Mn(2+). D173, Y175, N177, and D182 together coordinate Ca(2+). Residues D182 and H187 each coordinate Mn(2+). Residue 262–263 coordinates a carbohydrate; the sequence is LY. Positions 282–290 are excised as a propeptide; sequence EIPDIATVV.

The protein belongs to the leguminous lectin family. Homotetramer. Post-translationally, the mature chain consists of residues 164-281 followed by 30-148. To form a mature chain the precursor undergoes further post-translational modification after removal of the signal sequence; cleavage after Asn at positions Asn-148, Asn-163, and Asn-281 is followed by transposition and ligation (By formation of a new peptide bond) of residues 164-281 and 30-148.

Glucose/D-mannose/rhamnose specific lectin. Has hemagglutinating activity towards rabbit erythrocytes. Has mitogenic activity towards murine splenocytes that is inhibited by glucose. Inhibits HIV-1 reverse transcriptase with an IC(50) of 35 uM. Has a potent antiproliferative activity against L1210 leukemia cells in vitro that is not inhibited by glucose. Inhibits translation in cell-free rabbit reticulocyte system with an IC(50) of 2.08 uM. Lacks anti-fungal activity against M.arachidicola, B.cenera and F.oxysporum. The polypeptide is Concanavalin-A (Canavalia gladiata (Sword bean)).